The chain runs to 338 residues: 1-aminocyclopropane-1-carboxylate deaminase (338 aa).

Lys-51 bears the N6-(pyridoxal phosphate)lysine mark. The Nucleophile role is filled by Ser-78.

Belongs to the ACC deaminase/D-cysteine desulfhydrase family. Homotrimer. Pyridoxal 5'-phosphate is required as a cofactor.

It catalyses the reaction 1-aminocyclopropane-1-carboxylate + H2O = 2-oxobutanoate + NH4(+). In terms of biological role, catalyzes a cyclopropane ring-opening reaction, the irreversible conversion of 1-aminocyclopropane-1-carboxylate (ACC) to ammonia and alpha-ketobutyrate. Allows growth on ACC as a nitrogen source. This Acidovorax ebreus (strain TPSY) (Diaphorobacter sp. (strain TPSY)) protein is 1-aminocyclopropane-1-carboxylate deaminase.